A 220-amino-acid polypeptide reads, in one-letter code: Small ribosomal subunit protein uS2 (220 aa).

Belongs to the universal ribosomal protein uS2 family.

In Methanococcus maripaludis (strain DSM 14266 / JCM 13030 / NBRC 101832 / S2 / LL), this protein is Small ribosomal subunit protein uS2.